A 343-amino-acid polypeptide reads, in one-letter code: Dihydroorotase (343 aa).

Histidine 14 and histidine 16 together coordinate Zn(2+). Residues 16–18 (HLR) and asparagine 42 contribute to the substrate site. Positions 100, 137, and 175 each coordinate Zn(2+). Position 100 is an N6-carboxylysine (lysine 100). Substrate is bound at residue histidine 137. Leucine 220 serves as a coordination point for substrate. Aspartate 248 contributes to the Zn(2+) binding site. Aspartate 248 is a catalytic residue. Histidine 252 and alanine 264 together coordinate substrate.

The protein belongs to the metallo-dependent hydrolases superfamily. DHOase family. Class II DHOase subfamily. Homodimer. Zn(2+) serves as cofactor.

The enzyme catalyses (S)-dihydroorotate + H2O = N-carbamoyl-L-aspartate + H(+). It participates in pyrimidine metabolism; UMP biosynthesis via de novo pathway; (S)-dihydroorotate from bicarbonate: step 3/3. Its function is as follows. Catalyzes the reversible cyclization of carbamoyl aspartate to dihydroorotate. The polypeptide is Dihydroorotase (Parasynechococcus marenigrum (strain WH8102)).